We begin with the raw amino-acid sequence, 123 residues long: Beta-2-microglobulin (123 aa).

Positions 1–21 (MSRLFLFALLGHLCFLPYLDA) are cleaved as a signal peptide. The 90-residue stretch at 29–118 (PRVQVYSRYP…STLNEPKVVK (90 aa)) folds into the Ig-like C1-type domain. An intrachain disulfide couples Cys-49 to Cys-104.

Belongs to the beta-2-microglobulin family. Heterodimer of an alpha chain and a beta chain. Beta-2-microglobulin is the beta-chain of major histocompatibility complex class I molecules.

It is found in the secreted. Functionally, component of the class I major histocompatibility complex (MHC). Involved in the presentation of peptide antigens to the immune system. This Monodelphis domestica (Gray short-tailed opossum) protein is Beta-2-microglobulin (B2M).